The following is a 262-amino-acid chain: 3-methyl-2-oxobutanoate hydroxymethyltransferase (262 aa).

Mg(2+)-binding residues include D42 and D81. 3-methyl-2-oxobutanoate-binding positions include 42-43 (DS), D81, and K110. E112 contributes to the Mg(2+) binding site. E180 serves as the catalytic Proton acceptor.

It belongs to the PanB family. Homodecamer; pentamer of dimers. Mg(2+) is required as a cofactor.

The protein localises to the cytoplasm. The enzyme catalyses 3-methyl-2-oxobutanoate + (6R)-5,10-methylene-5,6,7,8-tetrahydrofolate + H2O = 2-dehydropantoate + (6S)-5,6,7,8-tetrahydrofolate. Its pathway is cofactor biosynthesis; (R)-pantothenate biosynthesis; (R)-pantoate from 3-methyl-2-oxobutanoate: step 1/2. In terms of biological role, catalyzes the reversible reaction in which hydroxymethyl group from 5,10-methylenetetrahydrofolate is transferred onto alpha-ketoisovalerate to form ketopantoate. This is 3-methyl-2-oxobutanoate hydroxymethyltransferase from Legionella pneumophila subsp. pneumophila (strain Philadelphia 1 / ATCC 33152 / DSM 7513).